A 104-amino-acid polypeptide reads, in one-letter code: Large ribosomal subunit protein bL21 (104 aa).

The protein belongs to the bacterial ribosomal protein bL21 family. Part of the 50S ribosomal subunit. Contacts protein L20.

Functionally, this protein binds to 23S rRNA in the presence of protein L20. The protein is Large ribosomal subunit protein bL21 of Pseudomonas putida (strain GB-1).